Reading from the N-terminus, the 147-residue chain is D-aminoacyl-tRNA deacylase (147 aa).

The Gly-cisPro motif, important for rejection of L-amino acids motif lies at 136-137 (GP).

It belongs to the DTD family. In terms of assembly, homodimer.

Its subcellular location is the cytoplasm. It catalyses the reaction glycyl-tRNA(Ala) + H2O = tRNA(Ala) + glycine + H(+). The enzyme catalyses a D-aminoacyl-tRNA + H2O = a tRNA + a D-alpha-amino acid + H(+). In terms of biological role, an aminoacyl-tRNA editing enzyme that deacylates mischarged D-aminoacyl-tRNAs. Also deacylates mischarged glycyl-tRNA(Ala), protecting cells against glycine mischarging by AlaRS. Acts via tRNA-based rather than protein-based catalysis; rejects L-amino acids rather than detecting D-amino acids in the active site. By recycling D-aminoacyl-tRNA to D-amino acids and free tRNA molecules, this enzyme counteracts the toxicity associated with the formation of D-aminoacyl-tRNA entities in vivo and helps enforce protein L-homochirality. This is D-aminoacyl-tRNA deacylase from Streptococcus thermophilus (strain CNRZ 1066).